A 409-amino-acid chain; its full sequence is tRNA(Met) cytidine acetate ligase (409 aa).

Residues 7-20, Gly-102, Asn-169, and Arg-194 each bind ATP; that span reads VVEY…HLYH.

The protein belongs to the TmcAL family.

It localises to the cytoplasm. The catalysed reaction is cytidine(34) in elongator tRNA(Met) + acetate + ATP = N(4)-acetylcytidine(34) in elongator tRNA(Met) + AMP + diphosphate. Catalyzes the formation of N(4)-acetylcytidine (ac(4)C) at the wobble position of elongator tRNA(Met), using acetate and ATP as substrates. First activates an acetate ion to form acetyladenylate (Ac-AMP) and then transfers the acetyl group to tRNA to form ac(4)C34. The protein is tRNA(Met) cytidine acetate ligase of Clostridium botulinum (strain Kyoto / Type A2).